A 54-amino-acid chain; its full sequence is Soricidin (54 aa).

Disulfide bonds link C2–C23, C6–C27, and C9–C41.

Belongs to the opioid neuropeptide precursor family. In terms of assembly, member of a multiprotein complex. As to expression, salivary gland.

It is found in the secreted. Paralytic toxin that immobilizes a mealworm for 7 days. Inhibits the transient receptor potential cation channel subfamily V member 6 (TRPV6). This is Soricidin from Blarina brevicauda (Northern short-tailed shrew).